Here is a 65-residue protein sequence, read N- to C-terminus: Sec-independent protein translocase protein TatA (65 aa).

The chain crosses the membrane as a helical span at residues 9-29 (ILIIVLLVVVVFGVGKLPQVG). Residues 40–65 (RKASTGEDAKEEVETKEETKPAEKSE) form a disordered region. Over residues 43–65 (STGEDAKEEVETKEETKPAEKSE) the composition is skewed to basic and acidic residues.

It belongs to the TatA/E family. In terms of assembly, forms a complex with TatC.

The protein localises to the cell membrane. Part of the twin-arginine translocation (Tat) system that transports large folded proteins containing a characteristic twin-arginine motif in their signal peptide across membranes. TatA could form the protein-conducting channel of the Tat system. The protein is Sec-independent protein translocase protein TatA of Dehalococcoides mccartyi (strain ATCC BAA-2100 / JCM 16839 / KCTC 5957 / BAV1).